Here is a 384-residue protein sequence, read N- to C-terminus: Ribosomal RNA large subunit methyltransferase G (384 aa).

Belongs to the methyltransferase superfamily. RlmG family.

It is found in the cytoplasm. It carries out the reaction guanosine(1835) in 23S rRNA + S-adenosyl-L-methionine = N(2)-methylguanosine(1835) in 23S rRNA + S-adenosyl-L-homocysteine + H(+). Its function is as follows. Specifically methylates the guanine in position 1835 (m2G1835) of 23S rRNA. This Streptomyces griseus subsp. griseus (strain JCM 4626 / CBS 651.72 / NBRC 13350 / KCC S-0626 / ISP 5235) protein is Ribosomal RNA large subunit methyltransferase G.